A 211-amino-acid polypeptide reads, in one-letter code: Pyridoxine/pyridoxamine 5'-phosphate oxidase (211 aa).

Residues 7-10 and Lys65 each bind substrate; that span reads RREY. FMN-binding positions include 60–65, 75–76, Arg81, Lys82, and Gln104; these read RIVLLK and YT. Substrate contacts are provided by Tyr122, Arg126, and Ser130. Residues 139-140 and Trp184 contribute to the FMN site; that span reads QS. Position 190-192 (190-192) interacts with substrate; that stretch reads RLH. Arg194 provides a ligand contact to FMN.

This sequence belongs to the pyridoxamine 5'-phosphate oxidase family. As to quaternary structure, homodimer. FMN is required as a cofactor.

The enzyme catalyses pyridoxamine 5'-phosphate + O2 + H2O = pyridoxal 5'-phosphate + H2O2 + NH4(+). It carries out the reaction pyridoxine 5'-phosphate + O2 = pyridoxal 5'-phosphate + H2O2. The protein operates within cofactor metabolism; pyridoxal 5'-phosphate salvage; pyridoxal 5'-phosphate from pyridoxamine 5'-phosphate: step 1/1. It functions in the pathway cofactor metabolism; pyridoxal 5'-phosphate salvage; pyridoxal 5'-phosphate from pyridoxine 5'-phosphate: step 1/1. Functionally, catalyzes the oxidation of either pyridoxine 5'-phosphate (PNP) or pyridoxamine 5'-phosphate (PMP) into pyridoxal 5'-phosphate (PLP). This chain is Pyridoxine/pyridoxamine 5'-phosphate oxidase, found in Photobacterium profundum (strain SS9).